The following is a 465-amino-acid chain: tRNA modification GTPase MnmE (465 aa).

(6S)-5-formyl-5,6,7,8-tetrahydrofolate is bound by residues arginine 23, glutamate 81, and lysine 120. Residues 217-389 (GVHVVLAGRP…LIASLCDKVG (173 aa)) enclose the TrmE-type G domain. Asparagine 227 contacts K(+). Residues 227 to 232 (NAGKSS), 246 to 252 (TDVAGTT), and 271 to 274 (DTAG) each bind GTP. A Mg(2+)-binding site is contributed by serine 231. K(+) contacts are provided by threonine 246, valine 248, and threonine 251. A Mg(2+)-binding site is contributed by threonine 252. Lysine 465 contributes to the (6S)-5-formyl-5,6,7,8-tetrahydrofolate binding site.

Belongs to the TRAFAC class TrmE-Era-EngA-EngB-Septin-like GTPase superfamily. TrmE GTPase family. In terms of assembly, homodimer. Heterotetramer of two MnmE and two MnmG subunits. It depends on K(+) as a cofactor.

Its subcellular location is the cytoplasm. Functionally, exhibits a very high intrinsic GTPase hydrolysis rate. Involved in the addition of a carboxymethylaminomethyl (cmnm) group at the wobble position (U34) of certain tRNAs, forming tRNA-cmnm(5)s(2)U34. This chain is tRNA modification GTPase MnmE, found in Psychrobacter sp. (strain PRwf-1).